Consider the following 382-residue polypeptide: Galactokinase (382 aa).

Residue 34 to 37 (EHTD) coordinates substrate. Residue 124-130 (GAGLSSS) coordinates ATP. Residues serine 130 and glutamate 162 each contribute to the Mg(2+) site. The Proton acceptor role is filled by aspartate 174. Residue tyrosine 223 coordinates substrate.

The protein belongs to the GHMP kinase family. GalK subfamily.

It localises to the cytoplasm. It carries out the reaction alpha-D-galactose + ATP = alpha-D-galactose 1-phosphate + ADP + H(+). The protein operates within carbohydrate metabolism; galactose metabolism. Functionally, catalyzes the transfer of the gamma-phosphate of ATP to D-galactose to form alpha-D-galactose-1-phosphate (Gal-1-P). This chain is Galactokinase, found in Shigella flexneri.